We begin with the raw amino-acid sequence, 192 residues long: MKDKAPVSSQQDHFSRGGAVGGKPISDVRGTSRPFYRKPVSHNTIAELAEGFRVLSNGQKTISIPMKEVSALMASVGLHLSDEEFHEVMRVFGQGEQTNTEELSFKDFLSLMMCEVDDTMLEEMRGAFLHYDKQKTGFVTKKQFTELFATGGECSTPEEVEELLTIAEQDETDDKIDYNRFINELIHRLNFM.

The disordered stretch occupies residues 1 to 36 (MKDKAPVSSQQDHFSRGGAVGGKPISDVRGTSRPFY). 4 EF-hand domains span residues 46–80 (AELAEGFRVLSNGQKTISIPMKEVSALMASVGLHL), 81–118 (SDEEFHEVMRVFGQGEQTNTEELSFKDFLSLMMCEVDD), 119–154 (TMLEEMRGAFLHYDKQKTGFVTKKQFTELFATGGEC), and 155–190 (STPEEVEELLTIAEQDETDDKIDYNRFINELIHRLN). Ca(2+)-binding residues include T100, E102, D107, D132, and T136.

The sequence is that of EF-hand protein 5 from Trypanosoma brucei brucei.